Consider the following 198-residue polypeptide: dCTP deaminase (198 aa).

DCTP is bound by residues 110–115 (RSSLAR), D128, 136–138 (VLE), Y171, K178, and Q182. E138 serves as the catalytic Proton donor/acceptor. Residues 168–198 (ARPYNKREDAKYRDQKGAVASRISQDEKVNK) are disordered. Basic and acidic residues predominate over residues 172–183 (NKREDAKYRDQK).

Belongs to the dCTP deaminase family. In terms of assembly, homotrimer.

It catalyses the reaction dCTP + H2O + H(+) = dUTP + NH4(+). It functions in the pathway pyrimidine metabolism; dUMP biosynthesis; dUMP from dCTP (dUTP route): step 1/2. In terms of biological role, catalyzes the deamination of dCTP to dUTP. This is dCTP deaminase from Colwellia psychrerythraea (strain 34H / ATCC BAA-681) (Vibrio psychroerythus).